A 190-amino-acid chain; its full sequence is Protein A52 (190 aa).

It belongs to the orthopoxvirus A52R protein family. Interacts with host TRAF6 and IRAK2.

Bcl-2-like protein which targets host toll-like receptor signaling complexes to suppress innate immune response. Interacts with host TRAF6 to activate p38 and subsequently induce the expression of several cytokines such as IL-10. Also associates with host IRAK2 to inhibit NF-kappa-B signaling. The protein is Protein A52 of Homo sapiens (Human).